We begin with the raw amino-acid sequence, 430 residues long: MTSVVVVGTQWGDEGKGKITDFLSSDAEVIARYQGGDNAGHTIVIDNKKFKLHLIPSGIFFPEKISVIGNGVVVNPKSLVKELAYLHEEGVTTDNLRISDRAHVILPYHIKLDQLQEEAKGDNKIGTTIKGIGPAYMDKAARVGIRIADLLDRDIFAERLKTNLAEKNRLFEKMYDSAPIAFDEIFEEYYAYGQEIKKYVTDTSVILNDALDAGKRVLFEGAQGVMLDIDQGTYPFVTSSNPVAGGVTIGSGVGPSKINKVVGVCKAYTSRVGDGPFPTELFDEVGERIREIGHEYGTTTGRPRRVGWFDSVVMRHSRRVSGITNLSLNSIDVLSGLETVKICVAYDLDGKRIDHYPASLEQLKRCKPIYEELPGWSEDITGVRSLEDLPENARNYVRRIGELVGVRISTFSVGPGREQTNILESVWATI.

GTP is bound by residues 12–18 (GDEGKGK) and 40–42 (GHT). Residue D13 is the Proton acceptor of the active site. Positions 13 and 40 each coordinate Mg(2+). IMP-binding positions include 13-16 (DEGK), 38-41 (NAGH), T128, R142, Q223, T238, and R302. H41 serves as the catalytic Proton donor. A substrate-binding site is contributed by 298–304 (TTTGRPR). GTP-binding positions include R304, 330-332 (SID), and 412-414 (SVG).

Belongs to the adenylosuccinate synthetase family. Homodimer. Mg(2+) is required as a cofactor.

The protein localises to the cytoplasm. The catalysed reaction is IMP + L-aspartate + GTP = N(6)-(1,2-dicarboxyethyl)-AMP + GDP + phosphate + 2 H(+). It participates in purine metabolism; AMP biosynthesis via de novo pathway; AMP from IMP: step 1/2. Plays an important role in the de novo pathway of purine nucleotide biosynthesis. Catalyzes the first committed step in the biosynthesis of AMP from IMP. This is Adenylosuccinate synthetase from Streptococcus equi subsp. equi (strain 4047).